Consider the following 447-residue polypeptide: Probable glycine dehydrogenase (decarboxylating) subunit 1 (447 aa).

Belongs to the GcvP family. N-terminal subunit subfamily. In terms of assembly, the glycine cleavage system is composed of four proteins: P, T, L and H. In this organism, the P 'protein' is a heterodimer of two subunits.

It carries out the reaction N(6)-[(R)-lipoyl]-L-lysyl-[glycine-cleavage complex H protein] + glycine + H(+) = N(6)-[(R)-S(8)-aminomethyldihydrolipoyl]-L-lysyl-[glycine-cleavage complex H protein] + CO2. In terms of biological role, the glycine cleavage system catalyzes the degradation of glycine. The P protein binds the alpha-amino group of glycine through its pyridoxal phosphate cofactor; CO(2) is released and the remaining methylamine moiety is then transferred to the lipoamide cofactor of the H protein. This is Probable glycine dehydrogenase (decarboxylating) subunit 1 from Halalkalibacterium halodurans (strain ATCC BAA-125 / DSM 18197 / FERM 7344 / JCM 9153 / C-125) (Bacillus halodurans).